The primary structure comprises 334 residues: TPR repeat-containing protein YsoA (334 aa).

3 TPR repeats span residues 17 to 50 (KDRLVEKGMSSLKEKKYQEALELFSEAMKYDDTE), 52 to 84 (DLHLGMAICFLELGELEEAESVCEKMLKEGYGH), and 195 to 230 (HPIIKTMIVMLLAEHEYSKPVHISKFGESLTIEPSE).

This Bacillus subtilis (strain 168) protein is TPR repeat-containing protein YsoA (ysoA).